The chain runs to 86 residues: MAMHLWLVTLTLVPLLGMDRELMVSAGSLVFPRMPFCEHMAELPNCPQTPNLICGTDGLTYENECHLCLTRMKTMKDIQIMKDGQC.

The signal sequence occupies residues 1–26 (MAMHLWLVTLTLVPLLGMDRELMVSA). A Kazal-like domain is found at 31 to 86 (FPRMPFCEHMAELPNCPQTPNLICGTDGLTYENECHLCLTRMKTMKDIQIMKDGQC). 3 disulfides stabilise this stretch: Cys37–Cys68, Cys46–Cys65, and Cys54–Cys86.

As to expression, expressed in the intestinal tract.

It is found in the secreted. The chain is Serine protease inhibitor Kazal-type 4 (Spink4) from Mus musculus (Mouse).